The primary structure comprises 845 residues: Protein TSD2 (845 aa).

The disordered stretch occupies residues 193–283 (DVDSDSESDS…SASATRLTNA (91 aa)). 2 stretches are compositionally biased toward basic and acidic residues: residues 202–212 (SDSHSDSHSDS) and 230–242 (ARSH…DGSG). Over residues 243-272 (GKRKRGSHSPLSRRRQRHKQGQRHKPRHRS) the composition is skewed to basic residues.

This sequence belongs to the CDC45 family.

It localises to the nucleus. Temperature-sensitive protein required for DNA synthesis. May be a transcription factor that regulates the level or influences the stability of DNA polymerases or auxiliary proteins. The polypeptide is Protein TSD2 (TSD2) (Mycosarcoma maydis (Corn smut fungus)).